The primary structure comprises 146 residues: D-aminoacyl-tRNA deacylase (146 aa).

The short motif at 138–139 is the Gly-cisPro motif, important for rejection of L-amino acids element; the sequence is GP.

The protein belongs to the DTD family. In terms of assembly, homodimer.

It localises to the cytoplasm. It carries out the reaction glycyl-tRNA(Ala) + H2O = tRNA(Ala) + glycine + H(+). It catalyses the reaction a D-aminoacyl-tRNA + H2O = a tRNA + a D-alpha-amino acid + H(+). Functionally, an aminoacyl-tRNA editing enzyme that deacylates mischarged D-aminoacyl-tRNAs. Also deacylates mischarged glycyl-tRNA(Ala), protecting cells against glycine mischarging by AlaRS. Acts via tRNA-based rather than protein-based catalysis; rejects L-amino acids rather than detecting D-amino acids in the active site. By recycling D-aminoacyl-tRNA to D-amino acids and free tRNA molecules, this enzyme counteracts the toxicity associated with the formation of D-aminoacyl-tRNA entities in vivo and helps enforce protein L-homochirality. This Stenotrophomonas maltophilia (strain R551-3) protein is D-aminoacyl-tRNA deacylase.